The primary structure comprises 281 residues: AB hydrolase superfamily protein YclE (281 aa).

The region spanning 30–268 is the AB hydrolase-1 domain; that stretch reads SAVYYPRLFS…SGHQPMLEEP (239 aa). Ser95 (nucleophile) is an active-site residue. Residue Asp232 is part of the active site. His261 acts as the Proton donor in catalysis.

The protein belongs to the AB hydrolase superfamily.

The polypeptide is AB hydrolase superfamily protein YclE (yclE) (Bacillus subtilis (strain 168)).